The sequence spans 135 residues: Probable histone H2A.2 (135 aa).

The protein belongs to the histone H2A family. As to quaternary structure, the nucleosome is a histone octamer containing two molecules each of H2A, H2B, H3 and H4 assembled in one H3-H4 heterotetramer and two H2A-H2B heterodimers. The octamer wraps approximately 147 bp of DNA.

The protein resides in the nucleus. The protein localises to the chromosome. Core component of nucleosome. Nucleosomes wrap and compact DNA into chromatin, limiting DNA accessibility to the cellular machineries which require DNA as a template. Histones thereby play a central role in transcription regulation, DNA repair, DNA replication and chromosomal stability. DNA accessibility is regulated via a complex set of post-translational modifications of histones, also called histone code, and nucleosome remodeling. The polypeptide is Probable histone H2A.2 (Oryza sativa subsp. indica (Rice)).